A 98-amino-acid polypeptide reads, in one-letter code: UPF0235 protein Asuc_1977 (98 aa).

This sequence belongs to the UPF0235 family.

This Actinobacillus succinogenes (strain ATCC 55618 / DSM 22257 / CCUG 43843 / 130Z) protein is UPF0235 protein Asuc_1977.